A 994-amino-acid chain; its full sequence is Receptor-like protein 6 (994 aa).

The N-terminal stretch at 1 to 25 (MTGLYSSMSFFLRTIVLLFSTSSFC) is a signal peptide. The Extracellular portion of the chain corresponds to 26 to 946 (NTFASLTQDS…SSSSSSEEDE (921 aa)). N-linked (GlcNAc...) asparagine glycans are attached at residues asparagine 116, asparagine 134, and asparagine 154. LRR repeat units lie at residues 122–146 (LQHLQSVNLAYNNFTNSPIPAEFSK), 148–171 (MRLERLNLSRSSFSGHISIKLLQL), 174–199 (LVSLDLSSSFPYSPSSLSIEKPLFLH), 205–228 (FMNLRELDMSSVDISSAIPIEFSY), 230–253 (WSLRSLTLKGCNLLGRFPNSVLLI), 254–278 (PNLESISLDHNLNLEGSLPNFLRNN), 280–301 (LLKLSIYNTSFSGTIPNSISNL), 302–325 (KHLTSLKLQQSAFSGRIPSSLRSL), 326–349 (SHLSNLVLSENNFVGEIPSSVSNL), 350–373 (KQLTLFDVSDNNLNGNFPSSLLNL), 375–397 (QLRYIDICSNHFTGFLPPTISQL), 398–421 (SNLEFFSACDNSFTGSIPSSLFNI), 423–445 (SLTTLGLSYNQLNDTTNIKNISL), 446–471 (LHNLQRLLLDNNNFKASQVDLDVFLS), 477–497 (SLALSGIPLSTTNITSDSEFS), 498–520 (SHLEYLELSGCNIIEFPEFIRNQ), 521–544 (RNLSSIDLSNNNIKGQVPNWLWRL), 546–569 (ELSTVDLSNNSLIGFNGSLKALSG), and 571–595 (KIVMLDLSSNAFQGPLFMPPRGIQY). N-linked (GlcNAc...) asparagine glycans are attached at residues asparagine 277 and asparagine 287. Asparagine 420, asparagine 435, and asparagine 442 each carry an N-linked (GlcNAc...) asparagine glycan. Asparagine 489 carries N-linked (GlcNAc...) asparagine glycosylation. Asparagine 522, asparagine 554, and asparagine 561 each carry an N-linked (GlcNAc...) asparagine glycan. Residues 597–613 (LGSYNNFTGYIPPSICG) form an LRR 20; degenerate repeat. Residue asparagine 602 is glycosylated (N-linked (GlcNAc...) asparagine). LRR repeat units follow at residues 614–637 (LANPLILDLSNNNLHGLIPRCLEA), 639–663 (MSSLSVLNLRNNSLDGSLPNIFMNA), 665–687 (VLSSLDVSHNTLEGKLPASLAGC), 689–710 (ALEILNVESNNINDTFPFWLNS), 711–737 (LPKLQVLVLRSNNFRGTLHNVDGVWFG), 739–762 (PLLRITDVSHNDFVGTLPSDYFMN), 803–827 (LTKYTVIDFAGNKIQGKIPESVGIL), 828–851 (KELHVLNLSSNAFTGHIPSSLANL), 852–875 (TNLESLDISQNKIGGEIPPELGTL), and 877–900 (SLEWINVSHNQLVGSIPQGTQFHR). The N-linked (GlcNAc...) asparagine glycan is linked to asparagine 649. Residue asparagine 701 is glycosylated (N-linked (GlcNAc...) asparagine). Asparagine 762 is a glycosylation site (N-linked (GlcNAc...) asparagine). N-linked (GlcNAc...) asparagine glycosylation is found at asparagine 834 and asparagine 850. N-linked (GlcNAc...) asparagine glycans are attached at residues asparagine 882 and asparagine 902. The helical transmembrane segment at 947–967 (LISWIAACLGFAPGMVFGLTM) threads the bilayer. At 968-994 (GYIMTSHKHEWFMDTFGRRKGRSTRTR) the chain is on the cytoplasmic side.

Belongs to the RLP family.

It localises to the cell membrane. This chain is Receptor-like protein 6, found in Arabidopsis thaliana (Mouse-ear cress).